Here is a 342-residue protein sequence, read N- to C-terminus: Succinylglutamate desuccinylase (342 aa).

Histidine 63, glutamate 66, and histidine 155 together coordinate Zn(2+). Glutamate 219 is a catalytic residue.

The protein belongs to the AspA/AstE family. Succinylglutamate desuccinylase subfamily. Requires Zn(2+) as cofactor.

The enzyme catalyses N-succinyl-L-glutamate + H2O = L-glutamate + succinate. It functions in the pathway amino-acid degradation; L-arginine degradation via AST pathway; L-glutamate and succinate from L-arginine: step 5/5. In terms of biological role, transforms N(2)-succinylglutamate into succinate and glutamate. In Vibrio parahaemolyticus serotype O3:K6 (strain RIMD 2210633), this protein is Succinylglutamate desuccinylase.